A 137-amino-acid polypeptide reads, in one-letter code: Large ribosomal subunit protein uL16 (137 aa).

This sequence belongs to the universal ribosomal protein uL16 family. Part of the 50S ribosomal subunit.

Binds 23S rRNA and is also seen to make contacts with the A and possibly P site tRNAs. The polypeptide is Large ribosomal subunit protein uL16 (Xanthomonas axonopodis pv. citri (strain 306)).